The sequence spans 487 residues: Malonate-semialdehyde dehydrogenase 2 (487 aa).

NAD(+) is bound by residues Phe-154, Lys-178, Glu-181, Arg-182, and Ser-231. Cys-286 (nucleophile) is an active-site residue. Glu-386 is a binding site for NAD(+).

It belongs to the aldehyde dehydrogenase family. IolA subfamily. In terms of assembly, homotetramer.

It carries out the reaction 3-oxopropanoate + NAD(+) + CoA + H2O = hydrogencarbonate + acetyl-CoA + NADH + H(+). The catalysed reaction is 2-methyl-3-oxopropanoate + NAD(+) + CoA + H2O = propanoyl-CoA + hydrogencarbonate + NADH + H(+). The protein operates within polyol metabolism; myo-inositol degradation into acetyl-CoA; acetyl-CoA from myo-inositol: step 7/7. Catalyzes the oxidation of malonate semialdehyde (MSA) and methylmalonate semialdehyde (MMSA) into acetyl-CoA and propanoyl-CoA, respectively. Is involved in a myo-inositol catabolic pathway. Bicarbonate, and not CO2, is the end-product of the enzymatic reaction. This Bacillus thuringiensis subsp. konkukian (strain 97-27) protein is Malonate-semialdehyde dehydrogenase 2.